The chain runs to 275 residues: Large ribosomal subunit protein uL2 (275 aa).

The interval 224-275 (AMNPVDHPHGGGEAKAGQGNPHPVTPWGVPTKGYKTRKNKRTQQFIVRDRRG) is disordered.

Belongs to the universal ribosomal protein uL2 family. As to quaternary structure, part of the 50S ribosomal subunit. Forms a bridge to the 30S subunit in the 70S ribosome.

Functionally, one of the primary rRNA binding proteins. Required for association of the 30S and 50S subunits to form the 70S ribosome, for tRNA binding and peptide bond formation. It has been suggested to have peptidyltransferase activity; this is somewhat controversial. Makes several contacts with the 16S rRNA in the 70S ribosome. This is Large ribosomal subunit protein uL2 from Xanthomonas oryzae pv. oryzae (strain MAFF 311018).